The following is a 476-amino-acid chain: Glycogen synthase (476 aa).

Position 15 (Lys15) interacts with ADP-alpha-D-glucose.

The protein belongs to the glycosyltransferase 1 family. Bacterial/plant glycogen synthase subfamily.

It catalyses the reaction [(1-&gt;4)-alpha-D-glucosyl](n) + ADP-alpha-D-glucose = [(1-&gt;4)-alpha-D-glucosyl](n+1) + ADP + H(+). It functions in the pathway glycan biosynthesis; glycogen biosynthesis. Its function is as follows. Synthesizes alpha-1,4-glucan chains using ADP-glucose. The polypeptide is Glycogen synthase (Bacillus cereus (strain Q1)).